We begin with the raw amino-acid sequence, 217 residues long: Orotate phosphoribosyltransferase (217 aa).

Lysine 26 is a 5-phospho-alpha-D-ribose 1-diphosphate binding site. Residue 34-35 participates in orotate binding; it reads FF. Residues 72–73, arginine 99, lysine 100, lysine 103, histidine 105, and 124–132 each bind 5-phospho-alpha-D-ribose 1-diphosphate; these read YK and DDVITAGTA. Orotate-binding residues include threonine 128 and arginine 156.

Belongs to the purine/pyrimidine phosphoribosyltransferase family. PyrE subfamily. As to quaternary structure, homodimer. It depends on Mg(2+) as a cofactor.

It carries out the reaction orotidine 5'-phosphate + diphosphate = orotate + 5-phospho-alpha-D-ribose 1-diphosphate. The protein operates within pyrimidine metabolism; UMP biosynthesis via de novo pathway; UMP from orotate: step 1/2. In terms of biological role, catalyzes the transfer of a ribosyl phosphate group from 5-phosphoribose 1-diphosphate to orotate, leading to the formation of orotidine monophosphate (OMP). The polypeptide is Orotate phosphoribosyltransferase (Aeromonas salmonicida (strain A449)).